The chain runs to 447 residues: GTPase Der (447 aa).

EngA-type G domains follow at residues 3 to 167 (PVIA…FAQR) and 181 to 354 (IRLA…AAAM). GTP contacts are provided by residues 9 to 16 (GRPNVGKS), 56 to 60 (DTGGF), 119 to 122 (NKAE), 187 to 194 (GRPNVGKS), 234 to 238 (DTAGI), and 299 to 302 (NKWD). In terms of domain architecture, KH-like spans 355-439 (SNLSTPKLTR…PLRIELRSGK (85 aa)).

This sequence belongs to the TRAFAC class TrmE-Era-EngA-EngB-Septin-like GTPase superfamily. EngA (Der) GTPase family. Associates with the 50S ribosomal subunit.

In terms of biological role, GTPase that plays an essential role in the late steps of ribosome biogenesis. This Herminiimonas arsenicoxydans protein is GTPase Der.